Here is a 588-residue protein sequence, read N- to C-terminus: MSSCVSSQPTSDRVAPQDELGSGGGSREGQKPCEALRGLSSLSIHLGMESFIVVTECEPGRGVDLNLARDQPPEADGQELPLEASDPESRSPLSGRKMSLQEPSQGGPASSSNSLDMNGRCICPSLSYSPASSPQSSPRMPRRPTVESHHVSITGLQDCVQLNQYTLKDEIGKGSYGVVKLAYNENDNTYYAMKVLSKKKLIRQAGFPRRPPPRGARPAPGGCIQPRGPIEQVYQEIAILKKLDHPNVVKLVEVLDDPNEDHLYMVFELVNQGPVMEVPTLKPLSEDQARFYFQDLIKGIEYLHYQKIIHRDIKPSNLLVGEDGHIKIADFGVSNEFKGSDALLSNTVGTPAFMAPESLSETRKIFSGKALDVWAMGVTLYCFVFGQCPFMDERIMCLHSKIKSQALEFPDQPDIAEDLKDLITRMLDKNPESRIVVPEIKLHPWVTRHGAEPLPSEDENCTLVEVTEEEVENSVKHIPSLATVILVKTMIRKRSFGNPFEGSRREERSLSAPGNLLTKKPTREWEPLSEPKEARQRRQPPGPRAGPCGGGGSALVKGGPCVESWGAPAPGSPPRMPPLQPEEVMEPE.

Residues 1–11 (MSSCVSSQPTS) show a composition bias toward polar residues. Disordered regions lie at residues 1–34 (MSSC…KPCE) and 64–147 (DLNL…PTVE). S2 is subject to N-acetylserine. Phosphoserine is present on residues S99, S114, S129, S133, and S137. The span at 101-116 (QEPSQGGPASSSNSLD) shows a compositional bias: polar residues. Residues 124 to 139 (PSLSYSPASSPQSSPR) show a composition bias toward low complexity. Positions 165–446 (YTLKDEIGKG…VPEIKLHPWV (282 aa)) constitute a Protein kinase domain. ATP contacts are provided by residues 171 to 179 (IGKGSYGVV) and K194. Residues 204-226 (QAGFPRRPPPRGARPAPGGCIQP) form an RP domain region. Residues 205-225 (AGFPRRPPPRGARPAPGGCIQ) are disordered. Catalysis depends on D312, which acts as the Proton acceptor. The segment at 472-477 (ENSVKH) is autoinhibitory domain. Residues 475-500 (VKHIPSLATVILVKTMIRKRSFGNPF) form a calmodulin-binding region. Phosphoserine is present on residues S495, S511, T522, and S572. Residues 497–588 (GNPFEGSRRE…LQPEEVMEPE (92 aa)) form a disordered region. A compositionally biased stretch (basic and acidic residues) spans 521–536 (PTREWEPLSEPKEARQ). Positions 570–580 (PGSPPRMPPLQ) are enriched in pro residues.

It belongs to the protein kinase superfamily. Ser/Thr protein kinase family. In terms of assembly, interacts with calmodulin. Post-translationally, autophosphorylated and phosphorylated by PKA. Each isoform may show a different pattern of phosphorylation. Expressed in all tissues tested. A differential expression pattern compared to CAMKK1 is observed in the brain.

The protein localises to the nucleus. Its subcellular location is the cytoplasm. It localises to the cell projection. The protein resides in the neuron projection. The catalysed reaction is L-seryl-[protein] + ATP = O-phospho-L-seryl-[protein] + ADP + H(+). It carries out the reaction L-threonyl-[protein] + ATP = O-phospho-L-threonyl-[protein] + ADP + H(+). Activated by Ca(2+)/calmodulin. Binding of calmodulin may relieve intrasteric autoinhibition. Autophosphorylation does not alter activity or regulation by Ca(2+)/calmodulin. In part, activity is independent on Ca(2+)/calmodulin. Functionally, calcium/calmodulin-dependent protein kinase belonging to a proposed calcium-triggered signaling cascade involved in a number of cellular processes. Phosphorylates CAMK1, CAMK4 and CAMK1D. Efficiently phosphorylates 5'-AMP-activated protein kinase (AMPK) trimer, including that consisting of PRKAA1, PRKAB1 and PRKAG1. This phosphorylation is stimulated in response to Ca(2+) signals. May play a role in neurite growth. Isoform 2 may promote neurite elongation, while isoform 1 may promoter neurite branching. May be involved in hippocampal activation of CREB1. The protein is Calcium/calmodulin-dependent protein kinase kinase 2 (Camkk2) of Mus musculus (Mouse).